The following is a 310-amino-acid chain: Methionyl-tRNA formyltransferase (310 aa).

109-112 contacts (6S)-5,6,7,8-tetrahydrofolate; it reads SLLP. A disordered region spans residues 283–310; it reads QPQGKKAMPAADWARGARIGDGERFGDD. The span at 300-310 shows a compositional bias: basic and acidic residues; sequence RIGDGERFGDD.

The protein belongs to the Fmt family.

The catalysed reaction is L-methionyl-tRNA(fMet) + (6R)-10-formyltetrahydrofolate = N-formyl-L-methionyl-tRNA(fMet) + (6S)-5,6,7,8-tetrahydrofolate + H(+). Its function is as follows. Attaches a formyl group to the free amino group of methionyl-tRNA(fMet). The formyl group appears to play a dual role in the initiator identity of N-formylmethionyl-tRNA by promoting its recognition by IF2 and preventing the misappropriation of this tRNA by the elongation apparatus. The protein is Methionyl-tRNA formyltransferase of Thermobifida fusca (strain YX).